The sequence spans 240 residues: Phosphoribosylaminoimidazole-succinocarboxamide synthase (240 aa).

It belongs to the SAICAR synthetase family.

The catalysed reaction is 5-amino-1-(5-phospho-D-ribosyl)imidazole-4-carboxylate + L-aspartate + ATP = (2S)-2-[5-amino-1-(5-phospho-beta-D-ribosyl)imidazole-4-carboxamido]succinate + ADP + phosphate + 2 H(+). The protein operates within purine metabolism; IMP biosynthesis via de novo pathway; 5-amino-1-(5-phospho-D-ribosyl)imidazole-4-carboxamide from 5-amino-1-(5-phospho-D-ribosyl)imidazole-4-carboxylate: step 1/2. The protein is Phosphoribosylaminoimidazole-succinocarboxamide synthase of Limosilactobacillus fermentum (strain NBRC 3956 / LMG 18251) (Lactobacillus fermentum).